A 280-amino-acid chain; its full sequence is MKTLFEEIKASIKNNYNQDRSFWRPVLPWGGVFTIKAGRKAVSCTPLYVEIRLKNTCTIDGFLMLLYVILNENENFPRELSLHLGREFVDCFLYLMDTYSFTTVKLLWIWDKMEKQQYKSEVHKASLIIDLFGNEHDNFTKNLENLMSTIQESYCSNWRCPTRVQEDQQRTINIKCGGLREFSQRVFCHGAPPFVVLNMQHWKSEDLAYVPYYLDLSDHKYLLEGATLFNKEEHHYSAAFQIDGHWMHYDGLRNVNLILLNKPPEFLLLSSLVYIRATEK.

As to quaternary structure, interacts with DRD1, the dopamine D1 receptor.

In terms of biological role, could be a regulator of the dopamine receptor signaling pathway. In Bos taurus (Bovine), this protein is Dopamine receptor-interacting protein 1 (DORIP1).